A 242-amino-acid polypeptide reads, in one-letter code: Biosynthetic peptidoglycan transglycosylase (242 aa).

A helical transmembrane segment spans residues 19–39; that stretch reads ILAALAVFWGGGIALFSVVPV.

Belongs to the glycosyltransferase 51 family.

The protein resides in the cell inner membrane. The catalysed reaction is [GlcNAc-(1-&gt;4)-Mur2Ac(oyl-L-Ala-gamma-D-Glu-L-Lys-D-Ala-D-Ala)](n)-di-trans,octa-cis-undecaprenyl diphosphate + beta-D-GlcNAc-(1-&gt;4)-Mur2Ac(oyl-L-Ala-gamma-D-Glu-L-Lys-D-Ala-D-Ala)-di-trans,octa-cis-undecaprenyl diphosphate = [GlcNAc-(1-&gt;4)-Mur2Ac(oyl-L-Ala-gamma-D-Glu-L-Lys-D-Ala-D-Ala)](n+1)-di-trans,octa-cis-undecaprenyl diphosphate + di-trans,octa-cis-undecaprenyl diphosphate + H(+). It functions in the pathway cell wall biogenesis; peptidoglycan biosynthesis. Peptidoglycan polymerase that catalyzes glycan chain elongation from lipid-linked precursors. This Salmonella newport (strain SL254) protein is Biosynthetic peptidoglycan transglycosylase.